The primary structure comprises 248 residues: Probable transcriptional regulatory protein BT_2363 (248 aa).

It belongs to the TACO1 family.

The protein localises to the cytoplasm. The chain is Probable transcriptional regulatory protein BT_2363 from Bartonella tribocorum (strain CIP 105476 / IBS 506).